A 250-amino-acid polypeptide reads, in one-letter code: Hydroxyethylthiazole kinase (250 aa).

Residue Met-39 participates in substrate binding. 2 residues coordinate ATP: Arg-114 and Thr-159. Gly-186 serves as a coordination point for substrate.

It belongs to the Thz kinase family. Requires Mg(2+) as cofactor.

The enzyme catalyses 5-(2-hydroxyethyl)-4-methylthiazole + ATP = 4-methyl-5-(2-phosphooxyethyl)-thiazole + ADP + H(+). It functions in the pathway cofactor biosynthesis; thiamine diphosphate biosynthesis; 4-methyl-5-(2-phosphoethyl)-thiazole from 5-(2-hydroxyethyl)-4-methylthiazole: step 1/1. Catalyzes the phosphorylation of the hydroxyl group of 4-methyl-5-beta-hydroxyethylthiazole (THZ). This Lactococcus lactis subsp. lactis (strain IL1403) (Streptococcus lactis) protein is Hydroxyethylthiazole kinase.